The following is a 375-amino-acid chain: Actin (375 aa).

The protein belongs to the actin family.

The protein resides in the cytoplasm. The protein localises to the cytoskeleton. It carries out the reaction ATP + H2O = ADP + phosphate + H(+). In terms of biological role, actins are highly conserved proteins that are involved in various types of cell motility and are ubiquitously expressed in all eukaryotic cells. In Sterkiella cavicola (Ciliate), this protein is Actin.